Reading from the N-terminus, the 474-residue chain is Trehalose-6-phosphate synthase (474 aa).

Arginine 10 lines the D-glucose 6-phosphate pocket. 22 to 23 contacts UDP-alpha-D-glucose; that stretch reads GG. The D-glucose 6-phosphate site is built by tyrosine 77 and aspartate 131. 2 residues coordinate UDP-alpha-D-glucose: arginine 263 and lysine 268. Arginine 301 contacts D-glucose 6-phosphate. Residues phenylalanine 340 and 366-370 contribute to the UDP-alpha-D-glucose site; that span reads LVAKE.

Belongs to the glycosyltransferase 20 family. Homotetramer.

It carries out the reaction D-glucose 6-phosphate + UDP-alpha-D-glucose = alpha,alpha-trehalose 6-phosphate + UDP + H(+). Its pathway is glycan biosynthesis; trehalose biosynthesis. Functionally, probably involved in the osmoprotection via the biosynthesis of trehalose. Catalyzes the transfer of glucose from UDP-alpha-D-glucose (UDP-Glc) to D-glucose 6-phosphate (Glc-6-P) to form trehalose-6-phosphate. Acts with retention of the anomeric configuration of the UDP-sugar donor. The polypeptide is Trehalose-6-phosphate synthase (Enterobacter sp. (strain 638)).